A 331-amino-acid chain; its full sequence is Glucan endo-1,3-beta-glucosidase, acidic isoform GL161 (331 aa).

The first 9 residues, 1 to 9 (MCSIQIIGA), serve as a signal peptide directing secretion. Gln-10 carries the pyrrolidone carboxylic acid modification. Residues Asn-55 and Asn-75 are each glycosylated (N-linked (GlcNAc...) asparagine). Residue Glu-244 is the Nucleophile of the active site.

The protein belongs to the glycosyl hydrolase 17 family. Is expressed primarily in epidermal cell of healthy plant, and following induction by ethylene, accumulates in mesophyll cells.

Its subcellular location is the secreted. It is found in the extracellular space. It catalyses the reaction Hydrolysis of (1-&gt;3)-beta-D-glucosidic linkages in (1-&gt;3)-beta-D-glucans.. Functionally, is thought to be an important plant defense-related product against fungal pathogens. This Nicotiana tabacum (Common tobacco) protein is Glucan endo-1,3-beta-glucosidase, acidic isoform GL161.